The chain runs to 755 residues: Cartilage oligomeric matrix protein (755 aa).

An N-terminal signal peptide occupies residues 1 to 19 (MSPTACVLVLALAALRATG). Positions 21–84 (GQIPLGGDLA…PARTPGLSVR (64 aa)) are COMP N-terminal. The 40-residue stretch at 85–124 (PVALCAPGSCFPGVVCTETATGARCGPCPPGYTGNGSHCT) folds into the EGF-like 1 domain. Cystine bridges form between Cys-89–Cys-100, Cys-94–Cys-109, Cys-112–Cys-123, Cys-129–Cys-140, Cys-134–Cys-149, Cys-152–Cys-176, Cys-182–Cys-195, Cys-189–Cys-204, Cys-207–Cys-219, Cys-227–Cys-241, Cys-235–Cys-251, Cys-253–Cys-264, Cys-280–Cys-285, Cys-290–Cys-310, Cys-326–Cys-346, Cys-349–Cys-369, Cys-385–Cys-405, Cys-408–Cys-428, Cys-446–Cys-466, Cys-482–Cys-502, and Cys-518–Cys-739. A glycan (N-linked (GlcNAc...) asparagine) is linked at Asn-119. The region spanning 125 to 177 (DVNECNAHPCFPRVRCINTSPGFHCEACPPGFSGPTHEGVGLTFAKTNKQVCT) is the EGF-like 2; calcium-binding domain. Positions 178-220 (DINECETGQHNCVPNSVCVNTRGSFQCGPCQPGFVGDQRSGCQ) constitute an EGF-like 3; calcium-binding domain. The region spanning 223-265 (GQHFCPDGSPSPCHEKADCILERDGSRSCVCAVGWAGNGLLCG) is the EGF-like 4 domain. 8 TSP type-3 repeats span residues 266–298 (RDTDLDGFPDEKLRCSERQCRKDNCVTVPNSGQ), 299–334 (EDVDRDRIGDACDPDADGDGVPNEQDNCPLVRNPDQ), 335–357 (RNSDKDKWGDACDNCRSQKNDDQ), 358–393 (KDTDRDGQGDACDDDIDGDRIRNVADNCPRVPNFDQ), 394–416 (SDSDGDGVGDACDNCPQKDNPDQ), 417–454 (RDVDHDFVGDACDSDQDQDGDGHQDSRDNCPTVPNSAQ), 455–490 (QDSDHDGKGDACDDDDDNDGVPDSRDNCRLVPNPGQ), and 491–526 (EDNDRDGVGDACQGDFDADKVIDKIDVCPENAEVTL). The segment at 295–501 (NSGQEDVDRD…DNDRDGVGDA (207 aa)) is disordered. 2 stretches are compositionally biased toward basic and acidic residues: residues 332 to 344 (PDQRNSDKDKWGD) and 350 to 365 (RSQKNDDQKDTDRDGQ). Ser-394 carries the post-translational modification Phosphoserine. 2 stretches are compositionally biased toward basic and acidic residues: residues 412–424 (DNPDQRDVDHDFV) and 456–465 (DSDHDGKGDA). The segment at 525–755 (TLTDFRAFQT…DYERHRLRRA (231 aa)) is mediates cell survival and induction of the IAP family of survival proteins. In terms of domain architecture, TSP C-terminal spans 530 to 744 (RAFQTVVLDP…LRYRCNDTIP (215 aa)). Residue Asn-740 is glycosylated (N-linked (GlcNAc...) asparagine).

The protein belongs to the thrombospondin family. Pentamer; disulfide-linked. Exists in a more compact conformation in the presence of calcium and shows a more extended conformation in the absence of calcium. Interacts with ITGB3, ITGA5 and FN1. Binding to FN1 requires the presence of divalent cations (Ca(2+), Mg(2+) or Mn(2+)). The greatest amount of binding is seen in the presence of Mn(2+). Interacts with MATN1, MATN3, MATN4 and ACAN. Binds heparin, heparan sulfate and chondroitin sulfate. EDTA dimishes significantly its binding to ACAN and abolishes its binding to MATN3, MATN4 and chondroitin sulfate. Interacts with collagen I, II and IX, and interaction with these collagens is dependent on the presence of zinc ions. Interacts with ADAMTS12. Interacts with ITGA7. Ca(2+) is required as a cofactor. In terms of processing, proteolytically cleaved by metalloproteases ADAMTS4 and ADAMTS1 with ADAMTS4 showing more potent activity.

The protein resides in the secreted. It is found in the extracellular space. Its subcellular location is the extracellular matrix. In terms of biological role, plays a role in the structural integrity of cartilage via its interaction with other extracellular matrix proteins such as the collagens and fibronectin. Can mediate the interaction of chondrocytes with the cartilage extracellular matrix through interaction with cell surface integrin receptors. Could play a role in the pathogenesis of osteoarthritis. Potent suppressor of apoptosis in both primary chondrocytes and transformed cells. Suppresses apoptosis by blocking the activation of caspase-3 and by inducing the IAP family of survival proteins (BIRC3, BIRC2, BIRC5 and XIAP). Essential for maintaining a vascular smooth muscle cells (VSMCs) contractile/differentiated phenotype under physiological and pathological stimuli. Maintains this phenotype of VSMCs by interacting with ITGA7. In Rattus norvegicus (Rat), this protein is Cartilage oligomeric matrix protein.